Reading from the N-terminus, the 1902-residue chain is MLTDFLQAPVMAPWSPFSLHLLLLFLLLLPLTRAHRFSVPNASFNHLVLAPDQGKLYVGAVNHLFQLSPELEMESVAITGPVIDSPDCVPFRDLAECPQAQLTDNANQLLLVSSRAQELVACGQVRQGVCEKRRLGDVTQVLYQAEDPGDGQFVAANTLGVTTVGLVVPLPGRDLLLVARGLAGKLSAGVPPLTVRQLAGPQPFSSEGLGRLVVGDFSDYNNSYVGAFSDAHSAYFVFRRRGARAQTEYRSYVARVCLGDVNLYSYVEVPLTCHGQGLIQAAFLAPDTLLGAFSAGTSQAQAALCAFPLADLDGSMEQARRLCYTTGGQGPNGMEEATVEYGVTSRCVTLPPDSPESYPCGDEHTPSPIAGRQPLEAQPLLQLGQPISAVAALQTDGHTIAFLGDTEGQLHKVFLNSSHGQVYHSQQVGPPGSAISPDLLVDNSGDYLYVLTAQQVDRILVAACPQFPNCTTCLQARDPLCGWCILQGRCTRRAECGRAVQPNQWLWSYEDNHCLHIQSLLPAQHPRQEHGQITLSVPGLPNLAMDEYFYCAFGDYNSLAQVEEHHVVCATPPQDRMPPNPPGSDHVTLPLALMFEDVVLAATTFSFYDCSAIQALEVAAPCRTCVSSLWRCHWCPQSSHCVYGERCPEGEKAVYSAQEVDILVRGPEACPQVKGLASPQLVPVGWESHVTLHIENLHYFRGLPALYYCWLELPGKLRKLPAFLEETSRNSGLIHCQAQQFHPSMSQWELPVPIYVTRGEIQRLDNTGDLHVTLYDCAMGHPDCSHCQAANGSLSCLWCGDGQPACRYGPLCPPGAVEQLCPIPSIDVIEPLTGPPEGGLAITILGSNLGQAFNDVRNAVTVAGQPCNPDPSLYRISARIVCVTSPAPNGTSGPVQVAIKSRPPGISAQHFTYQDPVLLSLNPQWGPQAGGTQLTIHGQYLQTGGNVSAFVGDQPCPIQEPVCPEAIICHTMPQMEPGEAVVFVVFGHVERKLLTTPFRYTANPQLVEAEPSVSFRGGGRVIRVRGTGLDVVWQPLLSVWLEDEFQVKALGVQAQDVNPRRSCGAPAADPQACIHLESGLLQCSTLCSVNSSSLLLCHSPAVPDGALPKRVFFALDNMQVDFASASGGQGFLYQPNPRLAPLSHEGITHPYRLKPGHVLDVEGEGLNLGISKEEVQVHIGDGKCLVKTLTLTHLYCEPPQQAPQPTNGSGTLPQFVVQMGNVRLALGPVQYEAEPMISTFPVEAQVGLGMGAAMLIAAVLLLTLMYRHKSKQALRDYQKVLVQLENLETGVGDQCRKEFTDLMTEMTDLTSDLEASGIPFLDYRTYAERAFFPGHVGCPLQPGLEGPGEEGRRVTVCQGLTQLSNLLNSKLFLLTLIHTLEEQPSFSQRDRCHVASLLSLALHSKLEYLTDIMRTLLGDLAAHYVHKNPKLMLRRTETMVEKLLTNWLSICLYAFLKEVAGEPLYMLFRAIKYQVDKGPVDAVTGKAKRTLNDSHLLREDVEFRPLTLMALVGPGAGGAAGNSEVHRVPARVLDTDTITQVKEKVLDQIYKGTPFSQRPSVHSLDLEWRSGLAGHLTLSDEDLTSVTQNHWKRLNTLQHYKVPDGATVVLIPQLHNGGTVSQSLEQTGCHSGENTPMLEDGEEGGVRLWHLVKATEETEGAKVRRSSLRERERERARAKAIPEIYLTRLLSMKGTLQKFVDDTFQAILSMNRPVPIAVKYLFDFLDELAEKHGIEDPETLHIWKTNSLLLRFWVNALKNPQLIFDVRVSDNEDAILAVIAQTFIDSCMVSEHKVGRDSPVNKLLYAREIPRYKQMVEKYYADIRQSSPASYQEMNSALAELSGNYTSAPNCLEALRELYNHIHRYYDQIISALEEDPVAQKMQLACRLQQVAALVEYKVTDL.

A signal peptide spans 1-34 (MLTDFLQAPVMAPWSPFSLHLLLLFLLLLPLTRA). In terms of domain architecture, Sema spans 35-461 (HRFSVPNASF…TAQQVDRILV (427 aa)). At 35–1245 (HRFSVPNASF…MISTFPVEAQ (1211 aa)) the chain is on the extracellular side. The N-linked (GlcNAc...) asparagine glycan is linked to N41. 2 cysteine pairs are disulfide-bonded: C88-C97 and C122-C130. The N-linked (GlcNAc...) asparagine glycan is linked to N221. Intrachain disulfides connect C257–C360, C273–C305, and C323–C347. A disordered region spans residues 353–372 (DSPESYPCGDEHTPSPIAGR). N-linked (GlcNAc...) asparagine glycosylation is found at N416 and N469. Residues 463–515 (ACPQFPNCTTCLQARDPLCGWCILQGRCTRRAECGRAVQPNQWLWSYEDNHCL) form the PSI 1 domain. 5 disulfides stabilise this stretch: C464/C481, C470/C514, C473/C490, C484/C496, and C551/C569. PSI domains lie at 609–671 (DCSA…EACP) and 776–822 (DCAM…QLCP). N-linked (GlcNAc...) asparagine glycans are attached at residues N791, N889, N946, N1090, and N1207. IPT/TIG domains lie at 824 to 913 (PSID…HFTY), 915 to 1001 (DPVL…FRYT), and 1003 to 1134 (NPQL…FLYQ). A helical transmembrane segment spans residues 1246–1266 (VGLGMGAAMLIAAVLLLTLMY). The Cytoplasmic portion of the chain corresponds to 1267–1902 (RHKSKQALRD…ALVEYKVTDL (636 aa)).

It belongs to the plexin family. As to quaternary structure, binds MET and MST1R. Interacts with RIT2/RIN. Interacts (via cytoplasmic domain) with FSCN1 and RAC1. May form homodimers (via Sema domain). Interacts (via cytoplasmic domain) with ARHGDIA. As to expression, expressed in glioma cells (at protein level). Expressed in glioma cells and oligodendrocyte precursor cells.

The protein localises to the cell membrane. Functionally, receptor for SEMA5A that plays a role in axon guidance, invasive growth and cell migration. Stimulates neurite outgrowth and mediates Ca(2+)/Mg(2+)-dependent cell aggregation. In glioma cells, SEMA5A stimulation of PLXNB3 results in the disassembly of F-actin stress fibers, disruption of focal adhesions and cellular collapse as well as inhibition of cell migration and invasion through ARHGDIA-mediated inactivation of RAC1. The chain is Plexin-B3 (Plxnb3) from Rattus norvegicus (Rat).